The following is a 191-amino-acid chain: Potassium-transporting ATPase KdpC subunit (191 aa).

The chain crosses the membrane as a helical span at residues 6–26 (PALVLFILLTLLTGGVYPLLT).

This sequence belongs to the KdpC family. The system is composed of three essential subunits: KdpA, KdpB and KdpC.

It localises to the cell inner membrane. Its function is as follows. Part of the high-affinity ATP-driven potassium transport (or Kdp) system, which catalyzes the hydrolysis of ATP coupled with the electrogenic transport of potassium into the cytoplasm. This subunit acts as a catalytic chaperone that increases the ATP-binding affinity of the ATP-hydrolyzing subunit KdpB by the formation of a transient KdpB/KdpC/ATP ternary complex. The chain is Potassium-transporting ATPase KdpC subunit from Klebsiella pneumoniae (strain 342).